Consider the following 505-residue polypeptide: Phosphomevalonate kinase, peroxisomal (505 aa).

A2 carries the post-translational modification N-acetylalanine. The short motif at 57-65 (DVKLTSPQL) is the Peroxisomal targeting signal PTS2 element. 177-187 (VAKTGLGSSAA) contacts ATP.

Belongs to the GHMP kinase family. Mevalonate kinase subfamily.

The protein resides in the peroxisome. It catalyses the reaction (R)-5-phosphomevalonate + ATP = (R)-5-diphosphomevalonate + ADP. The protein operates within isoprenoid biosynthesis; isopentenyl diphosphate biosynthesis via mevalonate pathway; isopentenyl diphosphate from (R)-mevalonate: step 2/3. The protein is Phosphomevalonate kinase, peroxisomal of Arabidopsis thaliana (Mouse-ear cress).